The sequence spans 433 residues: uncharacterized protein (433 aa).

The 59-residue stretch at Met1–Glu59 folds into the TRAM domain. The [4Fe-4S] cluster site is built by Cys72, Cys80, Cys83, and Cys168. Positions 262, 291, 315, and 359 each coordinate S-adenosyl-L-methionine. Residue Cys386 is the Nucleophile of the active site.

This sequence belongs to the class I-like SAM-binding methyltransferase superfamily. RNA M5U methyltransferase family.

This is an uncharacterized protein from Streptomyces avermitilis (strain ATCC 31267 / DSM 46492 / JCM 5070 / NBRC 14893 / NCIMB 12804 / NRRL 8165 / MA-4680).